A 762-amino-acid polypeptide reads, in one-letter code: Semaphorin-4A (762 aa).

An N-terminal signal peptide occupies residues 1-32; that stretch reads MALPALGLDSWSFLGLFLFQLLLLFLPPATTA. Residues 33–684 lie on the Extracellular side of the membrane; it reads GREGQGPTPR…LAAPKSYWPH (652 aa). Positions 37-495 constitute a Sema domain; sequence QGPTPRVKYH…FSGGIWKVPR (459 aa). Cysteines 114 and 125 form a disulfide. Residues N121 and N136 are each glycosylated (N-linked (GlcNAc...) asparagine). Disulfide bonds link C143-C152, C270-C380, and C294-C340. N-linked (GlcNAc...) asparagine glycosylation is found at N314 and N497. Positions 497–544 constitute a PSI domain; that stretch reads NCSVYESCMDCVLARDPHCAWDPESQTCRLLPTPILKSWKQDMQQGNP. Cystine bridges form between C498/C515 and C507/C524. Residues 574-632 enclose the Ig-like C2-type domain; it reads NSILELPCPQSSALASYHWSHGVEAIPEAPSTVYNGSLLLLLRDGAGGLYQCWATENDF. A glycan (N-linked (GlcNAc...) asparagine) is linked at N608. The chain crosses the membrane as a helical span at residues 685–705; it reads FLTVTVLLALVLSGALVTFLV. The Cytoplasmic segment spans residues 706 to 762; the sequence is SPLGALRARGKVQGCGTLPSREKAPLSSEQCLQPSKEGRTSASDMDADNNLQGTEVA. A disordered region spans residues 722–762; it reads TLPSREKAPLSSEQCLQPSKEGRTSASDMDADNNLQGTEVA.

This sequence belongs to the semaphorin family. Interacts with PLXNB1, PLXNB2, PLXNB3, PLXND1 and TIMD2.

The protein localises to the cell membrane. Its function is as follows. Cell surface receptor for PLXNB1, PLXNB2, PLXNB3 and PLXND1 that plays an important role in cell-cell signaling. Regulates glutamatergic and GABAergic synapse development. Promotes the development of inhibitory synapses in a PLXNB1-dependent manner and promotes the development of excitatory synapses in a PLXNB2-dependent manner. Plays a role in priming antigen-specific T-cells, promotes differentiation of Th1 T-helper cells, and thereby contributes to adaptive immunity. Promotes phosphorylation of TIMD2. Inhibits angiogenesis. Promotes axon growth cone collapse. Inhibits axonal extension by providing local signals to specify territories inaccessible for growing axons. In Bos taurus (Bovine), this protein is Semaphorin-4A (SEMA4A).